The chain runs to 269 residues: Formamidopyrimidine-DNA glycosylase (269 aa).

The active-site Schiff-base intermediate with DNA is Pro-2. Residue Glu-3 is the Proton donor of the active site. Lys-57 serves as the catalytic Proton donor; for beta-elimination activity. Residues His-90, Arg-109, and Lys-150 each contribute to the DNA site. An FPG-type zinc finger spans residues 235–269 (QVYGRKGEPCRICGMPVVGTKHAQRATFYCRQCQK). The active-site Proton donor; for delta-elimination activity is the Arg-259.

The protein belongs to the FPG family. Monomer. Requires Zn(2+) as cofactor.

It catalyses the reaction Hydrolysis of DNA containing ring-opened 7-methylguanine residues, releasing 2,6-diamino-4-hydroxy-5-(N-methyl)formamidopyrimidine.. The catalysed reaction is 2'-deoxyribonucleotide-(2'-deoxyribose 5'-phosphate)-2'-deoxyribonucleotide-DNA = a 3'-end 2'-deoxyribonucleotide-(2,3-dehydro-2,3-deoxyribose 5'-phosphate)-DNA + a 5'-end 5'-phospho-2'-deoxyribonucleoside-DNA + H(+). Involved in base excision repair of DNA damaged by oxidation or by mutagenic agents. Acts as a DNA glycosylase that recognizes and removes damaged bases. Has a preference for oxidized purines, such as 7,8-dihydro-8-oxoguanine (8-oxoG). Has AP (apurinic/apyrimidinic) lyase activity and introduces nicks in the DNA strand. Cleaves the DNA backbone by beta-delta elimination to generate a single-strand break at the site of the removed base with both 3'- and 5'-phosphates. This Klebsiella pneumoniae subsp. pneumoniae (strain ATCC 700721 / MGH 78578) protein is Formamidopyrimidine-DNA glycosylase.